We begin with the raw amino-acid sequence, 384 residues long: Transcription factor TGA3 (384 aa).

Disordered stretches follow at residues 36 to 70 (KSDI…NNRV) and 76 to 95 (YNNS…EDRI). Residues 39-55 (INNITSNQNNNQSSSTT) show a composition bias toward low complexity. The span at 58-68 (VDARPEADDNN) shows a compositional bias: basic and acidic residues. Polar residues predominate over residues 76–88 (YNNSLEAEPSSNN). In terms of domain architecture, bZIP spans 96–138 (NDKMKRRLAQNREAARKSRLRKKAHVQQLEESRLKLSQLEQEL). Residues 98 to 118 (KMKRRLAQNREAARKSRLRKK) are basic motif. The short motif at 99–106 (MKRRLAQN) is the Nuclear localization signal element. Residues 117–144 (KKAHVQQLEESRLKLSQLEQELVRARQQ) are a coiled coil. Residues 124-138 (LEESRLKLSQLEQEL) are leucine-zipper. The DOG1 domain occupies 167-379 (IAAFEMEYTH…RALSSLWAAR (213 aa)). Residues K219, R236, and F249 each contribute to the hexadecanoate site. Residues 267-296 (DQQLLEVRNLQQSSQQAEEALSQGLDKLQQ) are a coiled coil.

It belongs to the bZIP family. In terms of assembly, binds DNA as a dimer. Interacts with NPR3, NPR4 and sumoylated NPR1. Interacts with GRXC7/ROXY1. Expressed in the whole plant.

It localises to the nucleus. Transcriptional activator that binds specifically to the DNA sequence 5'-TGACG-3'. Recognizes ocs elements like the as-1 motif of the cauliflower mosaic virus 35S promoter. Binding to the as-1-like cis elements mediate auxin- and salicylic acid-inducible transcription. Required to induce the systemic acquired resistance (SAR) via the regulation of pathogenesis-related genes expression. Binding to the as-1 element of PR-1 promoter is salicylic acid-inducible and mediated by sumoylated NPR1. Could also bind to the Hex-motif (5'-TGACGTGG-3') another cis-acting element found in plant histone promoters. The chain is Transcription factor TGA3 from Arabidopsis thaliana (Mouse-ear cress).